The primary structure comprises 286 residues: Nucleotide-binding protein HCH_05324 (286 aa).

G8–S15 is a binding site for ATP. Residue D60–N63 participates in GTP binding.

Belongs to the RapZ-like family.

Functionally, displays ATPase and GTPase activities. The polypeptide is Nucleotide-binding protein HCH_05324 (Hahella chejuensis (strain KCTC 2396)).